Here is a 1875-residue protein sequence, read N- to C-terminus: Soluble starch synthase 3a, chloroplastic/amyloplastic (1875 aa).

A chloroplast-targeting transit peptide spans 1 to 49; the sequence is MEMALRPQSLLCPRSRLKVVIRPASSASGGGLAQYFLMTRRYTGSRIVR. Positions 1007–1065 form a coiled coil; sequence KRELERVATEEAERRRHAEEQQRMGEQRAAEQAAREQAKKEIELKKNKLQNLLSSARTH. Positions 1014–1043 are disordered; that stretch reads ATEEAERRRHAEEQQRMGEQRAAEQAAREQ.

The protein belongs to the glycosyltransferase 1 family. Bacterial/plant glycogen synthase subfamily. As to expression, expressed in the endosperm.

It localises to the plastid. The protein localises to the chloroplast. The protein resides in the amyloplast. The enzyme catalyses [(1-&gt;4)-alpha-D-glucosyl](n) + ADP-alpha-D-glucose = [(1-&gt;4)-alpha-D-glucosyl](n+1) + ADP + H(+). It functions in the pathway glycan biosynthesis; starch biosynthesis. Its function is as follows. Involved in starch synthesis in endosperm amyloplasts. Plays an important role in the elongation of amylopectin B chains. This is Soluble starch synthase 3a, chloroplastic/amyloplastic from Oryza sativa subsp. japonica (Rice).